A 282-amino-acid polypeptide reads, in one-letter code: NAD-dependent protein deacetylase 1 (282 aa).

One can recognise a Deacetylase sirtuin-type domain in the interval 1–282 (MTVGRAESPE…ADELSPLPTH (282 aa)). NAD(+)-binding positions include 25 to 45 (GAGI…SPPS) and 101 to 104 (QNVD). His119 serves as the catalytic Proton acceptor. 4 residues coordinate Zn(2+): Cys127, Cys130, Cys181, and Cys184. NAD(+) is bound by residues 221–223 (GSS), 247–249 (NRG), and Cys265.

This sequence belongs to the sirtuin family. Class II subfamily. Zn(2+) serves as cofactor.

It localises to the cytoplasm. The enzyme catalyses N(6)-acetyl-L-lysyl-[protein] + NAD(+) + H2O = 2''-O-acetyl-ADP-D-ribose + nicotinamide + L-lysyl-[protein]. Functionally, NAD-dependent protein deacetylase which modulates the activities of several enzymes which are inactive in their acetylated form. This Mycobacterium avium (strain 104) protein is NAD-dependent protein deacetylase 1.